Consider the following 219-residue polypeptide: Adenylate kinase (219 aa).

ATP is bound at residue 10 to 15 (GAGKGT). The interval 30–59 (ATGDLFRANISQGTDLGKQARAYMDAGQLV) is NMP. Residues threonine 31, arginine 36, 57 to 59 (QLV), 85 to 88 (GFPR), and glutamine 92 contribute to the AMP site. The LID stretch occupies residues 126–164 (GRRVCRNNSAHVFHLTYNPPKAEGVCDACGGELYQRDDD). Residues arginine 127 and 137 to 138 (VF) each bind ATP. 2 residues coordinate AMP: arginine 161 and arginine 172. Residue glycine 200 participates in ATP binding.

Belongs to the adenylate kinase family. Monomer.

The protein localises to the cytoplasm. The enzyme catalyses AMP + ATP = 2 ADP. The protein operates within purine metabolism; AMP biosynthesis via salvage pathway; AMP from ADP: step 1/1. In terms of biological role, catalyzes the reversible transfer of the terminal phosphate group between ATP and AMP. Plays an important role in cellular energy homeostasis and in adenine nucleotide metabolism. This Streptomyces griseus subsp. griseus (strain JCM 4626 / CBS 651.72 / NBRC 13350 / KCC S-0626 / ISP 5235) protein is Adenylate kinase.